A 215-amino-acid polypeptide reads, in one-letter code: Adenylate kinase (215 aa).

10-15 (GAGKGT) serves as a coordination point for ATP. An NMP region spans residues 30–59 (STGDMFRAAMKNNTELGKKAKSFMDNGDLV). AMP is bound by residues T31, R36, 57 to 59 (DLV), 85 to 88 (GFPR), and Q92. An LID region spans residues 126–163 (GRWICRTCGKTYHEIYNPPKVPGKCDLDGGELYQREDD). R127 contributes to the ATP binding site. C130 and C133 together coordinate Zn(2+). ATP is bound at residue 136–137 (TY). The Zn(2+) site is built by C150 and D153. 2 residues coordinate AMP: R160 and R171. Position 199 (Q199) interacts with ATP.

It belongs to the adenylate kinase family. In terms of assembly, monomer.

It localises to the cytoplasm. The enzyme catalyses AMP + ATP = 2 ADP. Its pathway is purine metabolism; AMP biosynthesis via salvage pathway; AMP from ADP: step 1/1. Catalyzes the reversible transfer of the terminal phosphate group between ATP and AMP. Plays an important role in cellular energy homeostasis and in adenine nucleotide metabolism. In Listeria innocua serovar 6a (strain ATCC BAA-680 / CLIP 11262), this protein is Adenylate kinase.